The following is a 180-amino-acid chain: Large ribosomal subunit protein uL6 (180 aa).

Belongs to the universal ribosomal protein uL6 family. As to quaternary structure, part of the 50S ribosomal subunit.

In terms of biological role, this protein binds to the 23S rRNA, and is important in its secondary structure. It is located near the subunit interface in the base of the L7/L12 stalk, and near the tRNA binding site of the peptidyltransferase center. The protein is Large ribosomal subunit protein uL6 of Borreliella afzelii (strain PKo) (Borrelia afzelii).